The primary structure comprises 555 residues: Cytochrome P450 monooxygeanse terQ (555 aa).

The chain crosses the membrane as a helical span at residues 10–30 (VPAHAWPTITVAGAVMVVVLL). Residue Cys479 participates in heme binding. Positions 535–555 (DAGNTARVDPGAPDGVASEPS) are disordered.

This sequence belongs to the cytochrome P450 family. It depends on heme as a cofactor.

It localises to the membrane. The protein operates within secondary metabolite biosynthesis. Cytochrome P450 monooxygeanse; part of the gene cluster that mediates the biosynthesis of terpendoles, indole-diterpene (IDT) mycotoxins including terpendole I, terpendole K, terpendole C, as well as the kinesin Eg5 inhibitor terpendole E. TerQ is a C11-hydroxylating enzyme that converts paspalline into terpendole E. Is also able to hydroxylate 13-desoxyterpendole I at C-13 to produce terpendole I. Terpendoles biosynthesis begins with the synthesis of geranylgeranyl diphosphate (GGPP) by a yet unidentified GGPP synthase. Condensation of indole-3-glycerol phosphate with GGPP by the prenyltransferase terC then forms 3-geranylgeranylindole (3-GGI), followed by epoxidation and cyclization of this intermediate (by the FAD-dependent monooxygeanse terM and the terpene cyclase terB) to form paspaline. The cytochrome monooxygenase terQ then hydroxylates paspalline at C-11 to yield terpendole E. The cytochrome monooxygenase terP converts terpendole E to 13-desoxyterpendole I, and terQ converts 13-desoxyterpendole I into terpendole I. TerF and terK are required for conversion of terpendole I to terpendole C which is further converted to terpendole K. The chain is Cytochrome P450 monooxygeanse terQ from Tolypocladium album (Soil fungus).